The chain runs to 352 residues: UDP-N-acetylglucosamine--N-acetylmuramyl-(pentapeptide) pyrophosphoryl-undecaprenol N-acetylglucosamine transferase (352 aa).

2 residues coordinate UDP-N-acetyl-alpha-D-glucosamine: Ser-195 and Gln-287.

It belongs to the glycosyltransferase 28 family. MurG subfamily.

It localises to the cell membrane. The enzyme catalyses Mur2Ac(oyl-L-Ala-gamma-D-Glu-L-Lys-D-Ala-D-Ala)-di-trans,octa-cis-undecaprenyl diphosphate + UDP-N-acetyl-alpha-D-glucosamine = beta-D-GlcNAc-(1-&gt;4)-Mur2Ac(oyl-L-Ala-gamma-D-Glu-L-Lys-D-Ala-D-Ala)-di-trans,octa-cis-undecaprenyl diphosphate + UDP + H(+). Its pathway is cell wall biogenesis; peptidoglycan biosynthesis. Functionally, cell wall formation. Catalyzes the transfer of a GlcNAc subunit on undecaprenyl-pyrophosphoryl-MurNAc-pentapeptide (lipid intermediate I) to form undecaprenyl-pyrophosphoryl-MurNAc-(pentapeptide)GlcNAc (lipid intermediate II). The polypeptide is UDP-N-acetylglucosamine--N-acetylmuramyl-(pentapeptide) pyrophosphoryl-undecaprenol N-acetylglucosamine transferase (Streptococcus pneumoniae serotype 19F (strain G54)).